A 697-amino-acid polypeptide reads, in one-letter code: Portal protein (697 aa).

The interval 633–697 is disordered; the sequence is MSREAAGGVP…RRAGGPYGFH (65 aa). Basic and acidic residues predominate over residues 664 to 689; it reads ITADEERRGPERVGRFRNGGPDDPRR.

It belongs to the herpesviridae portal protein family. Homododecamerizes. Interacts with terminase subunits TRM1 and TRM3.

Its subcellular location is the virion. The protein resides in the host nucleus. Forms a portal in the viral capsid through which viral DNA is translocated during DNA packaging. Assembles as a dodecamer at a single fivefold axe of the T=16 icosahedric capsid. Binds to the molecular motor that translocates the viral DNA, termed terminase. The chain is Portal protein (UL104) from Homo sapiens (Human).